A 380-amino-acid chain; its full sequence is MAPNLRKSHPLLKLINNSLIDLPTPSNISAWWNFGSLLGICLLTQILTGLLLATHYTADTTLAFSSVAHTCRNVQYGWLIRNLHANGASFFFICIYLHIGRGFYYGSYLNKETWNTGVILLLALMATAFVGYVLPWGQMSFWGATVITNLFSAIPYIGQTLVEWAWGGFSVDNPTLTRFFALHFLLPFMIAGLALIHLTFLHESGSNNPLGILSNCDKIPFHPYFSLKDILGFIIMFLPLTTLALFSPNLLGDPENFTPANPLVTPPHIKPEWYFLFAYAILRSIPNKLGGVLALAASVLVLFLAPLLHKSKQRAMTFRPFSQFLFWTLAANLFILTWVGSQPVEHPFIIIGQLASLTYFTILLLLFPIAGALENKMLNY.

4 consecutive transmembrane segments (helical) span residues 34-54 (FGSLLGICLLTQILTGLLLAT), 78-99 (WLIRNLHANGASFFFICIYLHI), 114-134 (WNTGVILLLALMATAFVGYVL), and 179-199 (FFALHFLLPFMIAGLALIHLT). Positions 84 and 98 each coordinate heme b. Heme b is bound by residues His183 and His197. His202 lines the a ubiquinone pocket. 4 helical membrane-spanning segments follow: residues 227–247 (LKDILGFIIMFLPLTTLALFS), 289–309 (LGGVLALAASVLVLFLAPLLH), 321–341 (FSQFLFWTLAANLFILTWVGS), and 348–368 (FIIIGQLASLTYFTILLLLFP).

Belongs to the cytochrome b family. In terms of assembly, the cytochrome bc1 complex contains 11 subunits: 3 respiratory subunits (MT-CYB, CYC1 and UQCRFS1), 2 core proteins (UQCRC1 and UQCRC2) and 6 low-molecular weight proteins (UQCRH/QCR6, UQCRB/QCR7, UQCRQ/QCR8, UQCR10/QCR9, UQCR11/QCR10 and a cleavage product of UQCRFS1). This cytochrome bc1 complex then forms a dimer. Heme b is required as a cofactor.

The protein resides in the mitochondrion inner membrane. Component of the ubiquinol-cytochrome c reductase complex (complex III or cytochrome b-c1 complex) that is part of the mitochondrial respiratory chain. The b-c1 complex mediates electron transfer from ubiquinol to cytochrome c. Contributes to the generation of a proton gradient across the mitochondrial membrane that is then used for ATP synthesis. The chain is Cytochrome b (MT-CYB) from Alca torda (Razorbill).